The sequence spans 640 residues: 1-deoxy-D-xylulose-5-phosphate synthase (640 aa).

Thiamine diphosphate is bound by residues His79 and 120 to 122 (AHA). Asp151 provides a ligand contact to Mg(2+). Thiamine diphosphate is bound by residues 152 to 153 (GS), Asn180, Tyr287, and Glu369. Asn180 is a Mg(2+) binding site.

This sequence belongs to the transketolase family. DXPS subfamily. As to quaternary structure, homodimer. Mg(2+) serves as cofactor. Requires thiamine diphosphate as cofactor.

The enzyme catalyses D-glyceraldehyde 3-phosphate + pyruvate + H(+) = 1-deoxy-D-xylulose 5-phosphate + CO2. The protein operates within metabolic intermediate biosynthesis; 1-deoxy-D-xylulose 5-phosphate biosynthesis; 1-deoxy-D-xylulose 5-phosphate from D-glyceraldehyde 3-phosphate and pyruvate: step 1/1. In terms of biological role, catalyzes the acyloin condensation reaction between C atoms 2 and 3 of pyruvate and glyceraldehyde 3-phosphate to yield 1-deoxy-D-xylulose-5-phosphate (DXP). The sequence is that of 1-deoxy-D-xylulose-5-phosphate synthase from Hyphomonas neptunium (strain ATCC 15444).